A 123-amino-acid polypeptide reads, in one-letter code: MARIAGIDLPRDKRIVIGLTYIYGIGNTTAQKILAEAGVSEDVRVRDLSADQEDAIRATVDKLNLQLEGDLRRKVSLDIKSLQEIASYRGIRHRKGLPVRGQNTKNNARTRKGPAKAIAGKKK.

The tract at residues 93–123 is disordered; the sequence is HRKGLPVRGQNTKNNARTRKGPAKAIAGKKK. Positions 108–123 are enriched in basic residues; sequence ARTRKGPAKAIAGKKK.

It belongs to the universal ribosomal protein uS13 family. Part of the 30S ribosomal subunit. Forms a loose heterodimer with protein S19. Forms two bridges to the 50S subunit in the 70S ribosome.

Located at the top of the head of the 30S subunit, it contacts several helices of the 16S rRNA. In the 70S ribosome it contacts the 23S rRNA (bridge B1a) and protein L5 of the 50S subunit (bridge B1b), connecting the 2 subunits; these bridges are implicated in subunit movement. Contacts the tRNAs in the A and P-sites. The sequence is that of Small ribosomal subunit protein uS13 from Leuconostoc citreum (strain KM20).